A 309-amino-acid polypeptide reads, in one-letter code: THAP domain-containing protein 7 (309 aa).

Residues 1 to 93 form a THAP-type zinc finger; the sequence is MPRHCSAAGC…LKEGAVPTIF (93 aa). The interval 158-209 is disordered; sequence TLPASPAGRLEPGLSSPFSDLLGPLGAQADEAGCSAQPSPERQPSPLEPRPV. S162 is subject to Phosphoserine. Residues 198–209 are compositionally biased toward pro residues; the sequence is ERQPSPLEPRPV. S210 is modified (phosphoserine). Positions 229–232 match the HCFC1-binding motif (HBM) motif; the sequence is EHSY.

Forms homodimers. Interacts with HDAC3 and nuclear hormone receptor corepressors. Interacts via HBM with HCFC1.

It is found in the nucleus. Its subcellular location is the chromosome. Chromatin-associated, histone tail-binding protein that represses transcription via recruitment of HDAC3 and nuclear hormone receptor corepressors. This Homo sapiens (Human) protein is THAP domain-containing protein 7 (THAP7).